The chain runs to 457 residues: Aromatic amino acid transport protein AroP (457 aa).

Over 1 to 19 (MMEGQQHGEQLKRGLKNRH) the chain is Cytoplasmic. The chain crosses the membrane as a helical span at residues 20-40 (IQLIALGGAIGTGLFLGSASV). Over 41 to 42 (IQ) the chain is Periplasmic. Residues 43–63 (SAGPGIILGYAIAGFIAFLIM) traverse the membrane as a helical segment. The Cytoplasmic segment spans residues 64–86 (RQLGEMVVEEPVAGSFSHFAYKY). A helical transmembrane segment spans residues 87 to 107 (WGSFAGFASGWNYWVLYVLVA). Residues 108-117 (MAELTAVGKY) are Periplasmic-facing. The helical transmembrane segment at 118–138 (IQFWYPEIPTWVSAAVFFVVI) threads the bilayer. Over 139 to 155 (NAINLTNVTVFGEMEFW) the chain is Cytoplasmic. A helical membrane pass occupies residues 156–176 (FAIIKVIAVVAMIIFGGWLLF). Over 177–201 (SGNGGPQASVSNLWDQGGFLPHGFT) the chain is Periplasmic. A helical membrane pass occupies residues 202–222 (GLVMMMAIIMFSFGGLELVGI). At 223-240 (TAAEADNPEQSIPKATNQ) the chain is on the cytoplasmic side. The chain crosses the membrane as a helical span at residues 241 to 261 (VIYRILIFYIGSLAVLLSLMP). Topologically, residues 262–271 (WTRVTADTSP) are periplasmic. A helical transmembrane segment spans residues 272-292 (FVLIFHELGDTFVANALNIVV). Residues 293–333 (LTAALSVYNSCVYCNSRMLFGLAQQGNAPKALASVDKRGVP) are Cytoplasmic-facing. Residues 334-354 (VNTILVSALVTALCVLINYLA) traverse the membrane as a helical segment. The Periplasmic segment spans residues 355–358 (PESA). A helical transmembrane segment spans residues 359 to 379 (FGLLMALVVSALVINWAMISL). Residues 380 to 407 (AHMKFRRAKQEQGVVTRFPALLYPLGNW) lie on the Cytoplasmic side of the membrane. The chain crosses the membrane as a helical span at residues 408 to 428 (ICLLFMAVVLVIMLMTPGMAI). Residue serine 429 is a topological domain, periplasmic. The chain crosses the membrane as a helical span at residues 430–450 (VYLIPVWLVVLGIGYLFKEKT). Over 451-457 (AKAVKAH) the chain is Cytoplasmic.

The protein belongs to the amino acid-polyamine-organocation (APC) superfamily. Amino acid transporter (AAT) (TC 2.A.3.1) family.

The protein resides in the cell inner membrane. The catalysed reaction is L-phenylalanine(in) + H(+)(in) = L-phenylalanine(out) + H(+)(out). It carries out the reaction L-tryptophan(in) + H(+)(in) = L-tryptophan(out) + H(+)(out). It catalyses the reaction L-tyrosine(in) + H(+)(in) = L-tyrosine(out) + H(+)(out). Its function is as follows. Permease that is involved in the active transport across the cytoplasmic membrane of all three aromatic amino acids, phenylalanine, tyrosine and tryptophan. In Escherichia coli O157:H7, this protein is Aromatic amino acid transport protein AroP (aroP).